The sequence spans 215 residues: Adenylate kinase (215 aa).

10 to 15 (GTGKGT) lines the ATP pocket. The NMP stretch occupies residues 30–59 (STGDMLRESVVLKNKIGMIIKNIIEEGKLV). AMP-binding positions include T31, R36, 57–59 (KLV), 85–88 (GFPR), and Q92. Residues 122–159 (GRRIHIQSGRIYHVKFKPPKIKDKDDLTGQTLITRKDD) are LID. ATP-binding positions include R123 and 132–133 (IY). Residues R156 and R167 each contribute to the AMP site. Residue L200 participates in ATP binding.

This sequence belongs to the adenylate kinase family. In terms of assembly, monomer.

The protein localises to the cytoplasm. The enzyme catalyses AMP + ATP = 2 ADP. It functions in the pathway purine metabolism; AMP biosynthesis via salvage pathway; AMP from ADP: step 1/1. In terms of biological role, catalyzes the reversible transfer of the terminal phosphate group between ATP and AMP. Plays an important role in cellular energy homeostasis and in adenine nucleotide metabolism. This chain is Adenylate kinase, found in Buchnera aphidicola subsp. Acyrthosiphon pisum (strain 5A).